Consider the following 225-residue polypeptide: Phosphoserine phosphatase (225 aa).

Position 1 is an N-acetylmethionine (Met-1). The Nucleophile role is filled by Asp-20. Mg(2+) is bound by residues Asp-20 and Asp-22. 20-22 provides a ligand contact to L-serine; it reads DVD. Asp-22 functions as the Proton donor in the catalytic mechanism. Met-52 is a binding site for O-phospho-L-serine. Phosphate is bound at residue Gly-53. L-serine is bound by residues 109–111 and Lys-158; that span reads SGG. Residues 109-111 and Lys-158 each bind O-phospho-L-serine; that span reads SGG. Asp-179 serves as a coordination point for Mg(2+). O-phospho-L-serine is bound at residue Thr-182. Position 182 (Thr-182) interacts with phosphate.

Belongs to the HAD-like hydrolase superfamily. SerB family. Homodimer. It depends on Mg(2+) as a cofactor.

It localises to the cytoplasm. The protein localises to the cytosol. It carries out the reaction O-phospho-L-serine + H2O = L-serine + phosphate. The enzyme catalyses O-phospho-D-serine + H2O = D-serine + phosphate. Its pathway is amino-acid biosynthesis; L-serine biosynthesis; L-serine from 3-phospho-D-glycerate: step 3/3. Its function is as follows. Catalyzes the last irreversible step in the biosynthesis of L-serine from carbohydrates, the dephosphorylation of O-phospho-L-serine to L-serine. L-serine can then be used in protein synthesis, to produce other amino acids, in nucleotide metabolism or in glutathione synthesis, or can be racemized to D-serine, a neuromodulator. May also act on O-phospho-D-serine. This Bos taurus (Bovine) protein is Phosphoserine phosphatase.